The sequence spans 232 residues: Rhamnogalacturonan acetylesterase RhgT (232 aa).

The Nucleophile role is filled by serine 14. Catalysis depends on residues glutamate 191 and histidine 195.

It belongs to the 'GDSL' lipolytic enzyme family. As to quaternary structure, monomer.

Almost completely inhibited by diethylpyrocarbonate at 5 mM and completely inhibited by phenylmethylsulfonyl fluoride (PMSF) at 50 mM. Dimethyl phosphite achieves only a 53% inhibition. Also inhibited by metal ions (magnesium, manganese and calcium) and chelating agent (EDTA) at the same level. May play a role in the degradation of type I rhamnogalacturonan derived from plant cell walls. This enzyme has a broad substrate specificity, and shows strong preference for glucose pentaacetate, beta-naphthylacetate, and p-nitrophenyl acetate (pNPA). Also active toward acetylated xylan. In Bacillus subtilis (strain 168), this protein is Rhamnogalacturonan acetylesterase RhgT (rhgT).